A 377-amino-acid polypeptide reads, in one-letter code: Queuine tRNA-ribosyltransferase (377 aa).

Asp94 functions as the Proton acceptor in the catalytic mechanism. Substrate-binding positions include 94 to 98 (DSGGF), Asp148, Gln191, and Gly218. The RNA binding stretch occupies residues 249 to 255 (GVGTPDD). Asp268 serves as the catalytic Nucleophile. Positions 273–277 (TRAGR) are RNA binding; important for wobble base 34 recognition.

This sequence belongs to the queuine tRNA-ribosyltransferase family. As to quaternary structure, homodimer. Within each dimer, one monomer is responsible for RNA recognition and catalysis, while the other monomer binds to the replacement base PreQ1.

It carries out the reaction 7-aminomethyl-7-carbaguanine + guanosine(34) in tRNA = 7-aminomethyl-7-carbaguanosine(34) in tRNA + guanine. Its pathway is tRNA modification; tRNA-queuosine biosynthesis. Functionally, catalyzes the base-exchange of a guanine (G) residue with the queuine precursor 7-aminomethyl-7-deazaguanine (PreQ1) at position 34 (anticodon wobble position) in tRNAs with GU(N) anticodons (tRNA-Asp, -Asn, -His and -Tyr). Catalysis occurs through a double-displacement mechanism. The nucleophile active site attacks the C1' of nucleotide 34 to detach the guanine base from the RNA, forming a covalent enzyme-RNA intermediate. The proton acceptor active site deprotonates the incoming PreQ1, allowing a nucleophilic attack on the C1' of the ribose to form the product. After dissociation, two additional enzymatic reactions on the tRNA convert PreQ1 to queuine (Q), resulting in the hypermodified nucleoside queuosine (7-(((4,5-cis-dihydroxy-2-cyclopenten-1-yl)amino)methyl)-7-deazaguanosine). The polypeptide is Queuine tRNA-ribosyltransferase (Brucella melitensis biotype 1 (strain ATCC 23456 / CCUG 17765 / NCTC 10094 / 16M)).